The sequence spans 186 residues: ATP synthase subunit b, chloroplastic (186 aa).

A helical membrane pass occupies residues 26–44; it reads ILETNLINLGVVIGTLLYF.

Belongs to the ATPase B chain family. As to quaternary structure, F-type ATPases have 2 components, F(1) - the catalytic core - and F(0) - the membrane proton channel. F(1) has five subunits: alpha(3), beta(3), gamma(1), delta(1), epsilon(1). F(0) has four main subunits: a(1), b(1), b'(1) and c(10-14). The alpha and beta chains form an alternating ring which encloses part of the gamma chain. F(1) is attached to F(0) by a central stalk formed by the gamma and epsilon chains, while a peripheral stalk is formed by the delta, b and b' chains.

The protein resides in the plastid. It localises to the chloroplast thylakoid membrane. F(1)F(0) ATP synthase produces ATP from ADP in the presence of a proton or sodium gradient. F-type ATPases consist of two structural domains, F(1) containing the extramembraneous catalytic core and F(0) containing the membrane proton channel, linked together by a central stalk and a peripheral stalk. During catalysis, ATP synthesis in the catalytic domain of F(1) is coupled via a rotary mechanism of the central stalk subunits to proton translocation. Its function is as follows. Component of the F(0) channel, it forms part of the peripheral stalk, linking F(1) to F(0). The protein is ATP synthase subunit b, chloroplastic of Chara vulgaris (Common stonewort).